Consider the following 236-residue polypeptide: UPF0173 metal-dependent hydrolase AZC_2841 (236 aa).

This sequence belongs to the UPF0173 family.

This chain is UPF0173 metal-dependent hydrolase AZC_2841, found in Azorhizobium caulinodans (strain ATCC 43989 / DSM 5975 / JCM 20966 / LMG 6465 / NBRC 14845 / NCIMB 13405 / ORS 571).